We begin with the raw amino-acid sequence, 641 residues long: WW domain-binding protein 11 (641 aa).

Positions 1-11 (MGRRSTSSTKS) are enriched in polar residues. The disordered stretch occupies residues 1–37 (MGRRSTSSTKSGKFMNPTDQARKEARKRELKKNKKQR). The interval 1 to 45 (MGRRSTSSTKSGKFMNPTDQARKEARKRELKKNKKQRMMVRAAVL) is required for nuclear import. Lys-13 bears the N6-acetyllysine mark. Over residues 28–37 (RELKKNKKQR) the composition is skewed to basic residues. A coiled-coil region spans residues 75–133 (EKVLKDKRKKLRETFERILRLYEKENPDIYKELRKLEVEYEQKRAQLSQYFDAVKNAQH). At Ser-181 the chain carries Phosphoserine. The tract at residues 186–213 (LGHGVPRLPPGRKPPGPPPGPPPPQVLQ) is disordered. An Omega-N-methylarginine modification is found at Arg-192. Residues 192–210 (RLPPGRKPPGPPPGPPPPQ) show a composition bias toward pro residues. The interval 217-221 (RKVGF) is interaction with PP1. Residue Tyr-236 is modified to Phosphotyrosine. The segment at 236–549 (YSPELAQRGH…LIQRPKADDA (314 aa)) is disordered. Ser-237 carries the phosphoserine modification. A compositionally biased stretch (acidic residues) spans 253–263 (SEDDGYPEDMD). Over residues 276–304 (TDRSDAESDGDEFGHRDDSERDNTEEKKS) the composition is skewed to basic and acidic residues. Residues Ser-279 and Ser-283 each carry the phosphoserine modification. The segment at 306–310 (LSVRF) is interaction with PP1. Over residues 351-365 (EFSEEEDDDDSEDSE) the composition is skewed to acidic residues. Phosphoserine is present on residues Ser-353, Ser-361, and Ser-364. The segment covering 366–380 (AEKPSQKQHKEDSHA) has biased composition (basic and acidic residues). Residues 381–404 (DGSSAASSQQQAPPQAVPPSQIQA) show a composition bias toward low complexity. 3 stretches are compositionally biased toward pro residues: residues 405–447 (PPMP…PPGM), 456–504 (RLLP…PPRP), and 510–530 (PLVPPLGPAPPGLFPPAPLPN). The PGR motif lies at 455–466 (PRLLPPGPPPGR). Lys-557 participates in a covalent cross-link: Glycyl lysine isopeptide (Lys-Gly) (interchain with G-Cter in SUMO2). Lys-565 is subject to N6-acetyllysine. Lys-572 is covalently cross-linked (Glycyl lysine isopeptide (Lys-Gly) (interchain with G-Cter in SUMO2)). Residues 588-623 (ENKGATAVPQRRSEEDSAVPVAKAAPRSGPSVPVSV) are disordered. Ser-600 is modified (phosphoserine).

As to quaternary structure, interacts with PPP1CA, PPP1CB and PPP1CC. Interacts via the PGR motif with PQBP1 in the nucleus. Interacts with the WW domains of WBP4.

Its subcellular location is the nucleus. The protein localises to the cytoplasm. Functionally, activates pre-mRNA splicing. May inhibit PP1 phosphatase activity. The protein is WW domain-binding protein 11 (Wbp11) of Rattus norvegicus (Rat).